A 350-amino-acid chain; its full sequence is Carbamoyl dehydratase HypE (350 aa).

C350 carries the post-translational modification S-carbamoylcysteine. At C350 the chain carries S-cyanocysteine.

It belongs to the HypE family. Modified by HypF, which adds a carboxamido group to the thiolate of the C-terminal cysteine, yielding a protein-S-carboxamide. The carboxamido group is then dehydrated by HypE itself to yield a protein-thiocyanate.

The catalysed reaction is C-terminal S-carboxamide-L-cysteinyl-[HypE protein] + ATP = C-terminal S-cyanate-L-cysteinyl-[HypE protein] + ADP + phosphate + H(+). The protein operates within protein modification; [NiFe] hydrogenase maturation. In terms of biological role, involved in the maturation of [NiFe] hydrogenases. Along with HypF, it catalyzes the synthesis of the CN ligands of the active site iron of [NiFe]-hydrogenases. HypE catalyzes the ATP-dependent dehydration of the carboxamido group attached to its C-terminal cysteine to a cyano group. The protein is Carbamoyl dehydratase HypE of Rhizobium leguminosarum bv. viciae.